Reading from the N-terminus, the 835-residue chain is Protein translocase subunit SecA 1 (835 aa).

ATP is bound by residues glutamine 85, 103 to 107 (GEGKT), and aspartate 492. The disordered stretch occupies residues 788 to 807 (VQGEAVHPSSDGEEAKKKPV). Cysteine 819, cysteine 821, cysteine 830, and cysteine 831 together coordinate Zn(2+).

It belongs to the SecA family. As to quaternary structure, monomer and homodimer. Part of the essential Sec protein translocation apparatus which comprises SecA, SecYEG and auxiliary proteins SecDF. Other proteins may also be involved. The cofactor is Zn(2+).

The protein localises to the cell membrane. The protein resides in the cytoplasm. It carries out the reaction ATP + H2O + cellular proteinSide 1 = ADP + phosphate + cellular proteinSide 2.. In terms of biological role, part of the Sec protein translocase complex. Interacts with the SecYEG preprotein conducting channel. Has a central role in coupling the hydrolysis of ATP to the transfer of proteins into and across the cell membrane, serving as an ATP-driven molecular motor driving the stepwise translocation of polypeptide chains across the membrane. In Bacillus anthracis, this protein is Protein translocase subunit SecA 1.